A 106-amino-acid chain; its full sequence is Large ribosomal subunit protein uL24 (106 aa).

It belongs to the universal ribosomal protein uL24 family. As to quaternary structure, part of the 50S ribosomal subunit.

In terms of biological role, one of two assembly initiator proteins, it binds directly to the 5'-end of the 23S rRNA, where it nucleates assembly of the 50S subunit. Its function is as follows. One of the proteins that surrounds the polypeptide exit tunnel on the outside of the subunit. This Albidiferax ferrireducens (strain ATCC BAA-621 / DSM 15236 / T118) (Rhodoferax ferrireducens) protein is Large ribosomal subunit protein uL24.